Consider the following 286-residue polypeptide: Shikimate dehydrogenase (NADP(+)) (286 aa).

Residues 19–21 and threonine 66 each bind shikimate; that span reads SVS. Catalysis depends on lysine 70, which acts as the Proton acceptor. Residues asparagine 91 and aspartate 106 each coordinate shikimate. Residues 130-134 and alanine 225 contribute to the NADP(+) site; that span reads GAGGS. Tyrosine 227 contributes to the shikimate binding site. Position 248 (glycine 248) interacts with NADP(+).

This sequence belongs to the shikimate dehydrogenase family. In terms of assembly, homodimer.

The catalysed reaction is shikimate + NADP(+) = 3-dehydroshikimate + NADPH + H(+). It functions in the pathway metabolic intermediate biosynthesis; chorismate biosynthesis; chorismate from D-erythrose 4-phosphate and phosphoenolpyruvate: step 4/7. Involved in the biosynthesis of the chorismate, which leads to the biosynthesis of aromatic amino acids. Catalyzes the reversible NADPH linked reduction of 3-dehydroshikimate (DHSA) to yield shikimate (SA). The protein is Shikimate dehydrogenase (NADP(+)) of Dehalococcoides mccartyi (strain ATCC BAA-2100 / JCM 16839 / KCTC 5957 / BAV1).